We begin with the raw amino-acid sequence, 93 residues long: Large ribosomal subunit protein uL23cz/uL23cy (93 aa).

This sequence belongs to the universal ribosomal protein uL23 family. Part of the 50S ribosomal subunit.

It is found in the plastid. Its subcellular location is the chloroplast. Its function is as follows. Binds to 23S rRNA. The polypeptide is Large ribosomal subunit protein uL23cz/uL23cy (rpl23-A) (Populus alba (White poplar)).